The primary structure comprises 128 residues: Small ribosomal subunit protein eS6 (128 aa).

Belongs to the eukaryotic ribosomal protein eS6 family.

In Methanobrevibacter smithii (strain ATCC 35061 / DSM 861 / OCM 144 / PS), this protein is Small ribosomal subunit protein eS6.